The primary structure comprises 88 residues: Small ribosomal subunit protein uS17 (88 aa).

This sequence belongs to the universal ribosomal protein uS17 family. Part of the 30S ribosomal subunit.

In terms of biological role, one of the primary rRNA binding proteins, it binds specifically to the 5'-end of 16S ribosomal RNA. This chain is Small ribosomal subunit protein uS17, found in Mycoplasmopsis pulmonis (strain UAB CTIP) (Mycoplasma pulmonis).